A 163-amino-acid polypeptide reads, in one-letter code: SsrA-binding protein (163 aa).

Belongs to the SmpB family.

Its subcellular location is the cytoplasm. In terms of biological role, required for rescue of stalled ribosomes mediated by trans-translation. Binds to transfer-messenger RNA (tmRNA), required for stable association of tmRNA with ribosomes. tmRNA and SmpB together mimic tRNA shape, replacing the anticodon stem-loop with SmpB. tmRNA is encoded by the ssrA gene; the 2 termini fold to resemble tRNA(Ala) and it encodes a 'tag peptide', a short internal open reading frame. During trans-translation Ala-aminoacylated tmRNA acts like a tRNA, entering the A-site of stalled ribosomes, displacing the stalled mRNA. The ribosome then switches to translate the ORF on the tmRNA; the nascent peptide is terminated with the 'tag peptide' encoded by the tmRNA and targeted for degradation. The ribosome is freed to recommence translation, which seems to be the essential function of trans-translation. The chain is SsrA-binding protein from Shewanella putrefaciens (strain CN-32 / ATCC BAA-453).